Here is a 469-residue protein sequence, read N- to C-terminus: Argininosuccinate lyase (469 aa).

It belongs to the lyase 1 family. Argininosuccinate lyase subfamily.

Its subcellular location is the cytoplasm. The catalysed reaction is 2-(N(omega)-L-arginino)succinate = fumarate + L-arginine. It participates in amino-acid biosynthesis; L-arginine biosynthesis; L-arginine from L-ornithine and carbamoyl phosphate: step 3/3. This Burkholderia vietnamiensis (strain G4 / LMG 22486) (Burkholderia cepacia (strain R1808)) protein is Argininosuccinate lyase.